A 255-amino-acid polypeptide reads, in one-letter code: Thiazole synthase (255 aa).

The Schiff-base intermediate with DXP role is filled by Lys95. 1-deoxy-D-xylulose 5-phosphate is bound by residues Gly156, 182–183, and 204–205; these read AG and NT.

It belongs to the ThiG family. In terms of assembly, homotetramer. Forms heterodimers with either ThiH or ThiS.

Its subcellular location is the cytoplasm. It carries out the reaction [ThiS sulfur-carrier protein]-C-terminal-Gly-aminoethanethioate + 2-iminoacetate + 1-deoxy-D-xylulose 5-phosphate = [ThiS sulfur-carrier protein]-C-terminal Gly-Gly + 2-[(2R,5Z)-2-carboxy-4-methylthiazol-5(2H)-ylidene]ethyl phosphate + 2 H2O + H(+). Its pathway is cofactor biosynthesis; thiamine diphosphate biosynthesis. Functionally, catalyzes the rearrangement of 1-deoxy-D-xylulose 5-phosphate (DXP) to produce the thiazole phosphate moiety of thiamine. Sulfur is provided by the thiocarboxylate moiety of the carrier protein ThiS. In vitro, sulfur can be provided by H(2)S. The polypeptide is Thiazole synthase (Aeromonas salmonicida (strain A449)).